Consider the following 466-residue polypeptide: Gastric inhibitory polypeptide receptor (466 aa).

The N-terminal stretch at 1-21 (MTTSPILQLLLRLSLCGLLLQ) is a signal peptide. Over 22–138 (RAETGSKGQT…DQRLILERLQ (117 aa)) the chain is Extracellular. 3 disulfides stabilise this stretch: Cys-46/Cys-70, Cys-61/Cys-103, and Cys-84/Cys-118. Residues Asn-62 and Asn-77 are each glycosylated (N-linked (GlcNAc...) asparagine). The helical transmembrane segment at 139–161 (VMYTVGYSLSLATLLLALLILSL) threads the bilayer. Residues 162–169 (FRRLHCTR) lie on the Cytoplasmic side of the membrane. The helical transmembrane segment at 170–189 (NYIHINLFTSFMLRAAAILS) threads the bilayer. Residues 190–217 (RDRLLPRPGPYLGDQALALWNQALAACR) lie on the Extracellular side of the membrane. Residues 218-242 (TAQIVTQYCVGANYTWLLVEGVYLH) traverse the membrane as a helical segment. Topologically, residues 243-254 (SLLVLVGGSEEG) are cytoplasmic. The chain crosses the membrane as a helical span at residues 255–278 (HFRYYLLLGWGAPALFVIPWVIVR). Residues 279 to 293 (YLYENTQCWERNEVK) are Extracellular-facing. Residues 294–319 (AIWWIIRTPILMTILINFLIFIRILG) traverse the membrane as a helical segment. Over 320–341 (ILLSKLRTRQMRCRDYRLRLAR) the chain is Cytoplasmic. Residues 342 to 362 (STLTLVPLLGVHEVVFAPVTE) traverse the membrane as a helical segment. Over 363–377 (EQARGALRFAKLGFE) the chain is Extracellular. Residues 378–398 (IFLSSFQGFLVSVLYCFINKE) form a helical membrane-spanning segment. Over 399–466 (VQSEIRRGWH…EASRELESYC (68 aa)) the chain is Cytoplasmic. The interval 427 to 466 (AFRALPSGSGPGEVPTSRGLSSGTLPGPGNEASRELESYC) is disordered.

This sequence belongs to the G-protein coupled receptor 2 family. As to quaternary structure, may form homodimers and heterodimers with GLP1R. In terms of processing, N-glycosylation is required for cell surface expression and lengthens receptor half-life by preventing degradation in the ER.

It localises to the cell membrane. Functionally, this is a receptor for GIP. The activity of this receptor is mediated by G proteins which activate adenylyl cyclase. The chain is Gastric inhibitory polypeptide receptor (GIPR) from Homo sapiens (Human).